The sequence spans 25 residues: Toxin Tpa3 (25 aa).

The protein belongs to the non-disulfide-bridged peptide (NDBP) superfamily. As to expression, expressed by the venom gland.

The protein resides in the secreted. Functionally, unknown. Is not toxic to mammals. The sequence is that of Toxin Tpa3 from Tityus pachyurus (Colombian scorpion).